The following is a 91-amino-acid chain: MTRSLKKGPFVDHHLLAKAEKAVATKDKKPVKTWSRRSMVLPEFIGLTIAVHNGKQHVPVYVTDQMVGHKLGEFALTRTFKGHPADKKAKK.

Belongs to the universal ribosomal protein uS19 family.

Functionally, protein S19 forms a complex with S13 that binds strongly to the 16S ribosomal RNA. The protein is Small ribosomal subunit protein uS19 of Delftia acidovorans (strain DSM 14801 / SPH-1).